We begin with the raw amino-acid sequence, 317 residues long: Acetyl-coenzyme A carboxylase carboxyl transferase subunit alpha (317 aa).

A CoA carboxyltransferase C-terminal domain is found at 33-294 (NLDDEIARLQ…KQRLLDDLKE (262 aa)).

This sequence belongs to the AccA family. Acetyl-CoA carboxylase is a heterohexamer composed of biotin carboxyl carrier protein (AccB), biotin carboxylase (AccC) and two subunits each of ACCase subunit alpha (AccA) and ACCase subunit beta (AccD).

The protein localises to the cytoplasm. The catalysed reaction is N(6)-carboxybiotinyl-L-lysyl-[protein] + acetyl-CoA = N(6)-biotinyl-L-lysyl-[protein] + malonyl-CoA. The protein operates within lipid metabolism; malonyl-CoA biosynthesis; malonyl-CoA from acetyl-CoA: step 1/1. Functionally, component of the acetyl coenzyme A carboxylase (ACC) complex. First, biotin carboxylase catalyzes the carboxylation of biotin on its carrier protein (BCCP) and then the CO(2) group is transferred by the carboxyltransferase to acetyl-CoA to form malonyl-CoA. The chain is Acetyl-coenzyme A carboxylase carboxyl transferase subunit alpha from Pasteurella multocida (strain Pm70).